A 42-amino-acid chain; its full sequence is Photosystem I reaction center subunit IX (42 aa).

Residues 7–27 (YLSVAPVLSTLWFVSLAGLLI) traverse the membrane as a helical segment.

It belongs to the PsaJ family.

It is found in the plastid. It localises to the chloroplast thylakoid membrane. Functionally, may help in the organization of the PsaE and PsaF subunits. This Capsella bursa-pastoris (Shepherd's purse) protein is Photosystem I reaction center subunit IX.